A 320-amino-acid polypeptide reads, in one-letter code: Lipoyl synthase (320 aa).

Residues cysteine 67, cysteine 72, cysteine 78, cysteine 93, cysteine 97, cysteine 100, and serine 307 each coordinate [4Fe-4S] cluster. Residues phenylalanine 79–glutamate 296 enclose the Radical SAM core domain.

This sequence belongs to the radical SAM superfamily. Lipoyl synthase family. [4Fe-4S] cluster serves as cofactor.

The protein localises to the cytoplasm. It catalyses the reaction [[Fe-S] cluster scaffold protein carrying a second [4Fe-4S](2+) cluster] + N(6)-octanoyl-L-lysyl-[protein] + 2 oxidized [2Fe-2S]-[ferredoxin] + 2 S-adenosyl-L-methionine + 4 H(+) = [[Fe-S] cluster scaffold protein] + N(6)-[(R)-dihydrolipoyl]-L-lysyl-[protein] + 4 Fe(3+) + 2 hydrogen sulfide + 2 5'-deoxyadenosine + 2 L-methionine + 2 reduced [2Fe-2S]-[ferredoxin]. Its pathway is protein modification; protein lipoylation via endogenous pathway; protein N(6)-(lipoyl)lysine from octanoyl-[acyl-carrier-protein]: step 2/2. Catalyzes the radical-mediated insertion of two sulfur atoms into the C-6 and C-8 positions of the octanoyl moiety bound to the lipoyl domains of lipoate-dependent enzymes, thereby converting the octanoylated domains into lipoylated derivatives. The polypeptide is Lipoyl synthase (Haemophilus influenzae (strain PittGG)).